A 248-amino-acid chain; its full sequence is tRNA (guanine-N(1)-)-methyltransferase (248 aa).

S-adenosyl-L-methionine-binding positions include G113 and I133–L138.

Belongs to the RNA methyltransferase TrmD family. Homodimer.

The protein resides in the cytoplasm. The enzyme catalyses guanosine(37) in tRNA + S-adenosyl-L-methionine = N(1)-methylguanosine(37) in tRNA + S-adenosyl-L-homocysteine + H(+). Specifically methylates guanosine-37 in various tRNAs. The sequence is that of tRNA (guanine-N(1)-)-methyltransferase from Shewanella baltica (strain OS223).